Consider the following 606-residue polypeptide: Phosphomethylpyrimidine synthase (606 aa).

The span at 1-13 shows a compositional bias: polar residues; that stretch reads MTTADARTPASKQ. Disordered regions lie at residues 1–49 and 105–147; these read MTTA…SRPD and AGRP…DGRP. The segment covering 14–31 has biased composition (low complexity); the sequence is NDGTPDGTTPDAGTPNDG. The segment covering 105 to 117 has biased composition (basic and acidic residues); that stretch reads AGRPVRPEDDGLK. Residues Asn213, Met242, Tyr271, His307, 327–329, 368–371, and Glu407 contribute to the substrate site; these read SRG and DGLR. His411 serves as a coordination point for Zn(2+). Tyr434 is a binding site for substrate. His475 lines the Zn(2+) pocket. [4Fe-4S] cluster is bound by residues Cys555, Cys558, and Cys563.

The protein belongs to the ThiC family. It depends on [4Fe-4S] cluster as a cofactor.

The catalysed reaction is 5-amino-1-(5-phospho-beta-D-ribosyl)imidazole + S-adenosyl-L-methionine = 4-amino-2-methyl-5-(phosphooxymethyl)pyrimidine + CO + 5'-deoxyadenosine + formate + L-methionine + 3 H(+). The protein operates within cofactor biosynthesis; thiamine diphosphate biosynthesis. Catalyzes the synthesis of the hydroxymethylpyrimidine phosphate (HMP-P) moiety of thiamine from aminoimidazole ribotide (AIR) in a radical S-adenosyl-L-methionine (SAM)-dependent reaction. The polypeptide is Phosphomethylpyrimidine synthase (Streptomyces griseus subsp. griseus (strain JCM 4626 / CBS 651.72 / NBRC 13350 / KCC S-0626 / ISP 5235)).